Consider the following 544-residue polypeptide: Putative ankyrin repeat protein L289 (544 aa).

11 ANK repeats span residues 31 to 71 (KNFS…AQNE), 72 to 105 (HGWTALMIASILSNDWSSIKTVKLLLKKGADPNI), 110 to 143 (YSQTVLKLAASNVKYASNIKTIKLLIHYGADINH), 147 to 181 (LGVSVLHYCYIDYYTKSDNLEVIKLLLSYGMDINS), 185 to 218 (QGNTLLYIVSKVSQNNNSTETVKFLLENNADPNI), 222 to 255 (KGTTALMVASKYSNSTSNLATVKLLLDYEANINF), 259 to 297 (YNETALSKVVSNFYESNYNKNNFMTLKFLIQKGAIDIPI), 300 to 339 (DKLSILMVAVIRTYCSENSDNFTKLIELLLKHFNPNIQCS), 340 to 374 (NGKTVLHYLCNKQVCNFPYVDVINLLLKAGINPNI), 378 to 413 (QGKTALILACDNYCFLKNKEAVRLLCKVSTINTIDN), and 414 to 447 (TGQSALDYFLNKYKEKYTNILTIILKYGAYCVNK).

This is Putative ankyrin repeat protein L289 from Acanthamoeba polyphaga mimivirus (APMV).